Consider the following 240-residue polypeptide: ATP-dependent dethiobiotin synthetase BioD (240 aa).

15-20 (EIGKTF) lines the ATP pocket. Residue Thr19 coordinates Mg(2+). Lys40 is a catalytic residue. Residues Asp57, 118 to 121 (EGVG), and 178 to 179 (NR) contribute to the ATP site. 2 residues coordinate Mg(2+): Asp57 and Glu118.

It belongs to the dethiobiotin synthetase family. As to quaternary structure, homodimer. Mg(2+) serves as cofactor.

It localises to the cytoplasm. The enzyme catalyses (7R,8S)-7,8-diammoniononanoate + CO2 + ATP = (4R,5S)-dethiobiotin + ADP + phosphate + 3 H(+). Its pathway is cofactor biosynthesis; biotin biosynthesis; biotin from 7,8-diaminononanoate: step 1/2. Functionally, catalyzes a mechanistically unusual reaction, the ATP-dependent insertion of CO2 between the N7 and N8 nitrogen atoms of 7,8-diaminopelargonic acid (DAPA, also called 7,8-diammoniononanoate) to form a ureido ring. This is ATP-dependent dethiobiotin synthetase BioD from Burkholderia thailandensis (strain ATCC 700388 / DSM 13276 / CCUG 48851 / CIP 106301 / E264).